We begin with the raw amino-acid sequence, 363 residues long: Chorismate synthase (363 aa).

NADP(+) is bound at residue Arg-48. FMN is bound by residues 125 to 127 (RSS), 238 to 239 (NA), Gly-278, 293 to 297 (KPTAS), and Arg-319.

This sequence belongs to the chorismate synthase family. In terms of assembly, homotetramer. It depends on FMNH2 as a cofactor.

It catalyses the reaction 5-O-(1-carboxyvinyl)-3-phosphoshikimate = chorismate + phosphate. It participates in metabolic intermediate biosynthesis; chorismate biosynthesis; chorismate from D-erythrose 4-phosphate and phosphoenolpyruvate: step 7/7. In terms of biological role, catalyzes the anti-1,4-elimination of the C-3 phosphate and the C-6 proR hydrogen from 5-enolpyruvylshikimate-3-phosphate (EPSP) to yield chorismate, which is the branch point compound that serves as the starting substrate for the three terminal pathways of aromatic amino acid biosynthesis. This reaction introduces a second double bond into the aromatic ring system. This Acinetobacter baylyi (strain ATCC 33305 / BD413 / ADP1) protein is Chorismate synthase.